Here is a 161-residue protein sequence, read N- to C-terminus: Large-conductance mechanosensitive channel (161 aa).

The next 2 helical transmembrane spans lie at 14 to 34 (VVDMAVGIIVGGAFGSIVNTL) and 85 to 105 (GLFLNALVSFTIMAFSVFILV).

It belongs to the MscL family. Homopentamer.

It is found in the cell inner membrane. Functionally, channel that opens in response to stretch forces in the membrane lipid bilayer. May participate in the regulation of osmotic pressure changes within the cell. The protein is Large-conductance mechanosensitive channel of Chlorobium luteolum (strain DSM 273 / BCRC 81028 / 2530) (Pelodictyon luteolum).